A 124-amino-acid chain; its full sequence is Protein CYSTEINE-RICH TRANSMEMBRANE MODULE 10 (124 aa).

The segment at 1–103 (MSYQDPQHPV…PKNKKDKKDS (103 aa)) is disordered. Pro residues-rich tracts occupy residues 27 to 40 (AGYP…PPQY) and 65 to 88 (GYPP…PPPH). The helical transmembrane segment at 101–118 (KDSGGFMEGCLAMLCCCV) threads the bilayer.

It belongs to the CYSTM1 family. Heterodimers. Interacts with CYSTM7 and WIH1/CYSTM13. In terms of tissue distribution, mostly expressed in stems and,at low levels, in stems, roots, flowers, siliques and leaves.

Its subcellular location is the cell membrane. The protein resides in the cytoplasm. In terms of biological role, involved in resistance to abiotic stress. The sequence is that of Protein CYSTEINE-RICH TRANSMEMBRANE MODULE 10 from Arabidopsis thaliana (Mouse-ear cress).